The following is a 225-amino-acid chain: Thaumatin-like protein (225 aa).

The N-terminal stretch at 1–24 (MSTFKSLSLSALLFIAFLFTCARG) is a signal peptide. Disulfide bonds link cysteine 33/cysteine 224, cysteine 74/cysteine 84, cysteine 89/cysteine 95, cysteine 140/cysteine 213, cysteine 146/cysteine 196, cysteine 154/cysteine 164, cysteine 168/cysteine 177, and cysteine 178/cysteine 183.

Belongs to the thaumatin family. In terms of processing, N-glycosylated.

Its subcellular location is the secreted. Functionally, has antifungal activity against B.cinerea, C.comatus, M.arachidicola, P.piricola, C.albicans and S.carlsbergensis. Inhibits HIV-1 reverse transcriptase. This is Thaumatin-like protein from Actinidia chinensis var. chinensis (Chinese soft-hair kiwi).